A 233-amino-acid chain; its full sequence is MRVITVKNDIEGGKIAFTLLEEKMKAGAQTLGLATGSSPITFYEEIVKSNLDFSNMVSINLDEYVGIAASNDQSYSYFMHKHLFDAKPFKENNLPNGLAKDLKEEIKRYDAVINANPIDFQILGIGRNGHIGFNEPGTPFDITTHVVDLAPSTIEANSRFFNSIDDVPKQALSMGIGSIMKSKTIVLVAYGIEKAEAIASMIKGPITEDMPASILQKHDDVVIIVDEAAASKL.

Catalysis depends on Asp62, which acts as the Proton acceptor; for enolization step. Asn128 acts as the For ring-opening step in catalysis. Residue His130 is the Proton acceptor; for ring-opening step of the active site. Glu135 serves as the catalytic For ring-opening step.

This sequence belongs to the glucosamine/galactosamine-6-phosphate isomerase family. NagB subfamily.

The enzyme catalyses alpha-D-glucosamine 6-phosphate + H2O = beta-D-fructose 6-phosphate + NH4(+). The protein operates within amino-sugar metabolism; N-acetylneuraminate degradation; D-fructose 6-phosphate from N-acetylneuraminate: step 5/5. Functionally, catalyzes the reversible isomerization-deamination of glucosamine 6-phosphate (GlcN6P) to form fructose 6-phosphate (Fru6P) and ammonium ion. The protein is Glucosamine-6-phosphate deaminase of Streptococcus agalactiae serotype Ia (strain ATCC 27591 / A909 / CDC SS700).